Consider the following 156-residue polypeptide: Small ribosomal subunit protein uS7c (156 aa).

The protein belongs to the universal ribosomal protein uS7 family. Part of the 30S ribosomal subunit.

Its subcellular location is the plastid. It is found in the chloroplast. In terms of biological role, one of the primary rRNA binding proteins, it binds directly to 16S rRNA where it nucleates assembly of the head domain of the 30S subunit. This is Small ribosomal subunit protein uS7c (rps7) from Chlorella vulgaris (Green alga).